A 700-amino-acid chain; its full sequence is ABC transporter B family member 26, chloroplastic (700 aa).

Residues 1-59 (MAQQVLGCTSRPIRVSLHRCSVITTSDTIRRKNLRFVRNPRLSFSLQSSTRNYRLPSIN) constitute a chloroplast transit peptide. 3 helical membrane passes run 137 to 157 (WVIF…ITIP), 182 to 202 (LVTL…FFGI), and 268 to 288 (LIYL…ICCI). Residues 139–421 (IFAAFSTLIV…VGDNLSSLMQ (283 aa)) form the ABC transmembrane type-1 domain. An ABC transporter domain is found at 455 to 694 (IEFVDVSFSY…DGLYARLTKR (240 aa)). 490–497 (GLSGSGKS) serves as a coordination point for ATP.

Belongs to the ABC transporter superfamily. ABCB family. Multidrug resistance exporter (TC 3.A.1.201) subfamily.

The protein localises to the plastid. It localises to the chloroplast membrane. In Arabidopsis thaliana (Mouse-ear cress), this protein is ABC transporter B family member 26, chloroplastic (ABCB26).